A 227-amino-acid chain; its full sequence is 2,3-bisphosphoglycerate-dependent phosphoglycerate mutase (227 aa).

Substrate-binding positions include 7–14, 20–21, R59, 86–89, K97, 113–114, and 182–183; these read RHGFSEWN, TG, ERHY, RR, and GN. Catalysis depends on H8, which acts as the Tele-phosphohistidine intermediate. E86 (proton donor/acceptor) is an active-site residue.

Belongs to the phosphoglycerate mutase family. BPG-dependent PGAM subfamily. As to quaternary structure, homodimer.

It catalyses the reaction (2R)-2-phosphoglycerate = (2R)-3-phosphoglycerate. It participates in carbohydrate degradation; glycolysis; pyruvate from D-glyceraldehyde 3-phosphate: step 3/5. In terms of biological role, catalyzes the interconversion of 2-phosphoglycerate and 3-phosphoglycerate. The polypeptide is 2,3-bisphosphoglycerate-dependent phosphoglycerate mutase (Haemophilus influenzae (strain 86-028NP)).